Here is a 208-residue protein sequence, read N- to C-terminus: Small ribosomal subunit protein eS8 (208 aa).

The segment at 1 to 33 is disordered; the sequence is MGISRDHWHKRRATGGKRKPIRKKRKFELGRPA. The segment covering 7–26 has biased composition (basic residues); that stretch reads HWHKRRATGGKRKPIRKKRK.

Belongs to the eukaryotic ribosomal protein eS8 family.

The sequence is that of Small ribosomal subunit protein eS8 (RpS8) from Apis mellifera (Honeybee).